The following is a 449-amino-acid chain: Tubulin beta-2 chain (449 aa).

GTP-binding residues include glutamine 11 and glutamate 69. Mg(2+) is bound at residue glutamate 69. The residue at position 137 (histidine 137) is a Methylhistidine. Residues serine 138, glycine 142, threonine 143, glycine 144, asparagine 204, and asparagine 226 each contribute to the GTP site.

This sequence belongs to the tubulin family. As to quaternary structure, dimer of alpha and beta chains. A typical microtubule is a hollow water-filled tube with an outer diameter of 25 nm and an inner diameter of 15 nM. Alpha-beta heterodimers associate head-to-tail to form protofilaments running lengthwise along the microtubule wall with the beta-tubulin subunit facing the microtubule plus end conferring a structural polarity. Microtubules usually have 13 protofilaments but different protofilament numbers can be found in some organisms and specialized cells. The cofactor is Mg(2+).

The protein resides in the cytoplasm. It localises to the cytoskeleton. In terms of biological role, tubulin is the major constituent of microtubules, a cylinder consisting of laterally associated linear protofilaments composed of alpha- and beta-tubulin heterodimers. Microtubules grow by the addition of GTP-tubulin dimers to the microtubule end, where a stabilizing cap forms. Below the cap, tubulin dimers are in GDP-bound state, owing to GTPase activity of alpha-tubulin. The chain is Tubulin beta-2 chain (tubC) from Emericella nidulans (strain FGSC A4 / ATCC 38163 / CBS 112.46 / NRRL 194 / M139) (Aspergillus nidulans).